A 373-amino-acid polypeptide reads, in one-letter code: D-alanine--D-alanine ligase (373 aa).

One can recognise an ATP-grasp domain in the interval 156-363; it reads KKLLAADGLP…YPTLLATMIE (208 aa). 184-239 is a binding site for ATP; it reads CERLGLPVFVKPARGGSSIGVSRVSSWDQLPAAVARARRHDPKVIVEAAISGRELE. Positions 318, 330, and 332 each coordinate Mg(2+).

This sequence belongs to the D-alanine--D-alanine ligase family. Requires Mg(2+) as cofactor. Mn(2+) is required as a cofactor.

The protein resides in the cytoplasm. The catalysed reaction is 2 D-alanine + ATP = D-alanyl-D-alanine + ADP + phosphate + H(+). Its pathway is cell wall biogenesis; peptidoglycan biosynthesis. Functionally, cell wall formation. This chain is D-alanine--D-alanine ligase, found in Mycobacterium bovis (strain BCG / Pasteur 1173P2).